The sequence spans 623 residues: Quinoprotein ethanol dehydrogenase (623 aa).

Positions 1 to 34 (MTTRTSPAPAGLLRPSLHCLAFAVALGSAGAALA) are cleaved as a signal peptide. 3 residues coordinate Ca(2+): Asp45, Thr48, and Asp51. Glu95 contacts pyrroloquinoline quinone. An intrachain disulfide couples Cys139 to Cys140. Residues Arg145, Thr189, and 207–209 (HGS) contribute to the pyrroloquinoline quinone site. Glu213 is a Ca(2+) binding site. Positions 244–281 (LNGKDSTVTGDVKAPSWPDDRNSPTGKVESWSHGGGAP) are disordered. Ca(2+)-binding residues include Asn300 and Asp350. Asp350 acts as the Proton acceptor in catalysis. Arg378 contacts pyrroloquinoline quinone. Residues 413–434 (GRPVEREGQRPPLPEPGQKHGK) form a disordered region. Trp523 and Ala587 together coordinate pyrroloquinoline quinone.

Belongs to the bacterial PQQ dehydrogenase family. Homodimer. Interacts with cytochrome c550. It depends on pyrroloquinoline quinone as a cofactor. The cofactor is Ca(2+). Post-translationally, the disulfide ring formed between the two adjacent cysteine residues Cys-139 and Cys-140 is essential for efficient electron transfer at pH 7 from QEDH to its natural electron acceptor cytochrome c550.

It localises to the periplasm. It carries out the reaction a primary alcohol + 2 Fe(III)-[cytochrome c] = an aldehyde + 2 Fe(II)-[cytochrome c] + 2 H(+). The enzyme catalyses ethanol + 2 Fe(III)-[cytochrome c] = acetaldehyde + 2 Fe(II)-[cytochrome c] + 2 H(+). It catalyses the reaction butan-1-ol + 2 Fe(III)-[cytochrome c] = butanal + 2 Fe(II)-[cytochrome c] + 2 H(+). The catalysed reaction is propan-2-ol + 2 Fe(III)-[cytochrome c] = acetone + 2 Fe(II)-[cytochrome c] + 2 H(+). It carries out the reaction 1-propanol + 2 Fe(III)-[cytochrome c] = propanal + 2 Fe(II)-[cytochrome c] + 2 H(+). The protein operates within alcohol metabolism; ethanol degradation; acetate from ethanol: step 1/2. Its activity is regulated as follows. Inhibited by cyclopropanone ethylhemiketal. Activated by ammonia (500mM), methylamine (5mM), ethylamine (5mM), octylamine (5mM), ethanolamine (5mM) and 1-amino-2-propanol (5mM), in assays using artificial electron acceptors. Ammonia is not needed for, nor does it stimulate, the ethanol-oxidizing activity when using the natural electron acceptor cytochrome c550. Its function is as follows. Catalyzes the oxidation of ethanol and other primary alcohols to the corresponding aldehydes, except methanol, which is a very poor substrate. Uses a specific inducible cytochrome c550, encoded by the adjacent gene in the locus, as electron acceptor. Is a key enzyme of the carbon and energy metabolism during growth of P.aeruginosa on ethanol as the sole carbon and energy source. Is also able to use secondary alcohols as well as aminoalcohols like ethanolamine and 1-amino-2-propanol, and aldehydes as substrates. The sequence is that of Quinoprotein ethanol dehydrogenase from Pseudomonas aeruginosa (strain ATCC 15692 / DSM 22644 / CIP 104116 / JCM 14847 / LMG 12228 / 1C / PRS 101 / PAO1).